The following is a 328-amino-acid chain: tRNA uridine(34) hydroxylase (328 aa).

The region spanning 130 to 224 is the Rhodanese domain; that stretch reads LDEDTVVLDT…YGKDPEVQGE (95 aa). Cys-184 functions as the Cysteine persulfide intermediate in the catalytic mechanism.

It belongs to the TrhO family.

It carries out the reaction uridine(34) in tRNA + AH2 + O2 = 5-hydroxyuridine(34) in tRNA + A + H2O. In terms of biological role, catalyzes oxygen-dependent 5-hydroxyuridine (ho5U) modification at position 34 in tRNAs. This chain is tRNA uridine(34) hydroxylase, found in Streptococcus pyogenes serotype M6 (strain ATCC BAA-946 / MGAS10394).